Reading from the N-terminus, the 267-residue chain is MNQPLQHAASLLPEDPAALRQLIRAGRYRGHTSGLARGHVQANIVILTRDWAYDFLQFCALNRKACPLIDVTDPGDPVFRNLGRDVDIRTDVPMYRVYRDGNAYHETTGITELWRDDFVAFAIGCSFSFEQALLAANVPLKHINLGRNVAMYRTAIETRPAGRLSGKLVVSMRPLKAADAILATEITARYPDVHGAPVHIGDPRLIGIEDIESPDYGDAVPLDADEIPVFWACGVTPQAVIREARPEICITHAPGCMLVTDLDNNRL.

The protein belongs to the D-glutamate cyclase family.

This Cupriavidus taiwanensis (strain DSM 17343 / BCRC 17206 / CCUG 44338 / CIP 107171 / LMG 19424 / R1) (Ralstonia taiwanensis (strain LMG 19424)) protein is Putative hydro-lyase RALTA_B1245.